A 502-amino-acid chain; its full sequence is Tyrosine-protein kinase receptor old-1 (502 aa).

Residues 1–19 form the signal peptide; the sequence is MKGTLIFVVFYSSYGFAHC. Residues 20 to 58 are Extracellular-facing; sequence NTILRSSSLSRNFEDSLRRIPRSTDKDETGFEDSNVQEV. The helical transmembrane segment at 59–79 threads the bilayer; sequence IFILLYCLFVALAILICGLII. Residues 80-502 are Cytoplasmic-facing; it reads FYNSRKRELR…WLSDEKHCDS (423 aa). Residues 99 to 140 are disordered; the sequence is LLEPTSADHKRRNSSNIVPPEPTPYPITSGESDLRQTPSRLS. Positions 127-140 are enriched in polar residues; that stretch reads SGESDLRQTPSRLS. Residues 175–473 form the Protein kinase domain; the sequence is ISKGRPLGSG…ELKTTSNEYF (299 aa). Residues 181–189 and Lys-213 contribute to the ATP site; that span reads LGSGEFGII. Asp-321 (proton acceptor) is an active-site residue.

It belongs to the protein kinase superfamily. Tyr protein kinase family.

Its subcellular location is the cell membrane. The enzyme catalyses L-tyrosyl-[protein] + ATP = O-phospho-L-tyrosyl-[protein] + ADP + H(+). Receptor tyrosine kinase which plays a role in promoting longevity and resistance to stresses including UV irradiation and high temperatures, probably downstream of daf-16. The polypeptide is Tyrosine-protein kinase receptor old-1 (Caenorhabditis elegans).